Reading from the N-terminus, the 319-residue chain is Replication factor C small subunit (319 aa).

Gly45–Thr52 is an ATP binding site.

This sequence belongs to the activator 1 small subunits family. RfcS subfamily. Heteropentamer composed of four small subunits (RfcS) and one large subunit (RfcL). Both subunits interact with PCNA.

Its function is as follows. Part of the RFC clamp loader complex which loads the PCNA sliding clamp onto DNA. The complex possesses DNA-dependent ATPase activity which is further stimulated by PCNA. This Archaeoglobus fulgidus (strain ATCC 49558 / DSM 4304 / JCM 9628 / NBRC 100126 / VC-16) protein is Replication factor C small subunit (rfcS).